The sequence spans 711 residues: Polyribonucleotide nucleotidyltransferase (711 aa).

Mg(2+) is bound by residues D489 and D495. The KH domain maps to 556-615; it reads PRIHTIKISPDKIKDVIGKGGSVIRALTEETGTTIEIEDDGTVKIAATDGEKAKHAIRRI. An S1 motif domain is found at 625–693; the sequence is GRIYNGKVTR…RQGRVRLSIK (69 aa).

The protein belongs to the polyribonucleotide nucleotidyltransferase family. In terms of assembly, component of the RNA degradosome, which is a multiprotein complex involved in RNA processing and mRNA degradation. It depends on Mg(2+) as a cofactor.

It is found in the cytoplasm. The catalysed reaction is RNA(n+1) + phosphate = RNA(n) + a ribonucleoside 5'-diphosphate. In terms of biological role, involved in mRNA degradation. Catalyzes the phosphorolysis of single-stranded polyribonucleotides processively in the 3'- to 5'-direction. This Cronobacter sakazakii (strain ATCC BAA-894) (Enterobacter sakazakii) protein is Polyribonucleotide nucleotidyltransferase.